The following is a 378-amino-acid chain: Transcription factor YY2 (378 aa).

A mediates transcriptional activation region spans residues 39–113 (LETSVGQTIE…DNLLFSPEFG (75 aa)). The segment at 243-378 (EFTSMRPKKP…LTHVKNKNDQ (136 aa)) is mediates transcriptional repression. 4 C2H2-type zinc fingers span residues 260-284 (IACS…LHIH), 289-311 (HVCA…QLVH), 317-341 (YQCT…VRIH), and 347-371 (FVCP…ILTH).

It belongs to the YY transcription factor family. In terms of tissue distribution, weakly expressed by neuronal and glial cells in the cerebral cortex. Expressed by Purkinje cells and in the granular layers of the cerebellum. Expressed in all layers of spermatocytes in testis but not detected in sperm cells.

The protein localises to the nucleus. In terms of biological role, functions as a multifunctional transcription factor that may exhibit positive and negative control on a large number of genes. May antagonize YY1 and function in development and differentiation. The sequence is that of Transcription factor YY2 (Yy2) from Mus musculus (Mouse).